The following is a 77-amino-acid chain: Exodeoxyribonuclease 7 small subunit (77 aa).

Belongs to the XseB family. As to quaternary structure, heterooligomer composed of large and small subunits.

The protein localises to the cytoplasm. It catalyses the reaction Exonucleolytic cleavage in either 5'- to 3'- or 3'- to 5'-direction to yield nucleoside 5'-phosphates.. Bidirectionally degrades single-stranded DNA into large acid-insoluble oligonucleotides, which are then degraded further into small acid-soluble oligonucleotides. The sequence is that of Exodeoxyribonuclease 7 small subunit from Chromobacterium violaceum (strain ATCC 12472 / DSM 30191 / JCM 1249 / CCUG 213 / NBRC 12614 / NCIMB 9131 / NCTC 9757 / MK).